The chain runs to 415 residues: Imidazolonepropionase (415 aa).

2 residues coordinate Fe(3+): His76 and His78. Zn(2+) is bound by residues His76 and His78. 4-imidazolone-5-propanoate is bound by residues Arg85, Tyr148, and His181. Tyr148 serves as a coordination point for N-formimidoyl-L-glutamate. His246 provides a ligand contact to Fe(3+). His246 contributes to the Zn(2+) binding site. Residue Glu249 coordinates 4-imidazolone-5-propanoate. Residue Asp320 coordinates Fe(3+). Asp320 contacts Zn(2+). Residues Asn322 and Gly324 each coordinate N-formimidoyl-L-glutamate. Residue Thr325 coordinates 4-imidazolone-5-propanoate.

Belongs to the metallo-dependent hydrolases superfamily. HutI family. Zn(2+) serves as cofactor. The cofactor is Fe(3+).

It is found in the cytoplasm. It catalyses the reaction 4-imidazolone-5-propanoate + H2O = N-formimidoyl-L-glutamate. It functions in the pathway amino-acid degradation; L-histidine degradation into L-glutamate; N-formimidoyl-L-glutamate from L-histidine: step 3/3. Functionally, catalyzes the hydrolytic cleavage of the carbon-nitrogen bond in imidazolone-5-propanoate to yield N-formimidoyl-L-glutamate. It is the third step in the universal histidine degradation pathway. In Caldanaerobacter subterraneus subsp. tengcongensis (strain DSM 15242 / JCM 11007 / NBRC 100824 / MB4) (Thermoanaerobacter tengcongensis), this protein is Imidazolonepropionase.